A 486-amino-acid polypeptide reads, in one-letter code: Nuclear distribution protein PAC1 (486 aa).

The stretch at 66–99 (STVLRLQKKIIDLENEISNLNNIINSTNSDNNGI) forms a coiled coil. 8 WD repeats span residues 119 to 158 (QCEN…NTIP), 164 to 205 (AHTR…RTLN), 206 to 246 (GHEH…SLKS), 249 to 291 (GHSE…GVAM), 294 to 328 (GHSH…FPTI), 329 to 368 (PLEL…IAPH), 389 to 428 (GHSS…ETGY), and 437 to 483 (GHDG…NSIK).

It belongs to the WD repeat LIS1/nudF family. As to quaternary structure, self-associates. Interacts with NDL1 and dynein.

The protein localises to the cytoplasm. Its subcellular location is the cytoskeleton. It is found in the spindle pole. Its function is as follows. Positively regulates the activity of the minus-end directed microtubule motor protein dynein. Plays a central role in positioning the mitotic spindle at the bud neck during cell division. Targets cytoplasmic dynein to microtubule plus ends, thereby promoting dynein-mediated microtubule sliding along the bud cortex and consequently the movement of the mitotic spindle to the bud neck. This Candida albicans (strain SC5314 / ATCC MYA-2876) (Yeast) protein is Nuclear distribution protein PAC1.